The chain runs to 363 residues: S-adenosylmethionine:tRNA ribosyltransferase-isomerase (363 aa).

Belongs to the QueA family. Monomer.

Its subcellular location is the cytoplasm. It catalyses the reaction 7-aminomethyl-7-carbaguanosine(34) in tRNA + S-adenosyl-L-methionine = epoxyqueuosine(34) in tRNA + adenine + L-methionine + 2 H(+). It participates in tRNA modification; tRNA-queuosine biosynthesis. Transfers and isomerizes the ribose moiety from AdoMet to the 7-aminomethyl group of 7-deazaguanine (preQ1-tRNA) to give epoxyqueuosine (oQ-tRNA). The chain is S-adenosylmethionine:tRNA ribosyltransferase-isomerase from Brucella anthropi (strain ATCC 49188 / DSM 6882 / CCUG 24695 / JCM 21032 / LMG 3331 / NBRC 15819 / NCTC 12168 / Alc 37) (Ochrobactrum anthropi).